We begin with the raw amino-acid sequence, 251 residues long: Triosephosphate isomerase (251 aa).

9-11 (NWK) is a substrate binding site. H95 acts as the Electrophile in catalysis. The active-site Proton acceptor is E167. Substrate-binding positions include G173, S213, and 234–235 (GG).

The protein belongs to the triosephosphate isomerase family. As to quaternary structure, homodimer.

The protein resides in the cytoplasm. The enzyme catalyses D-glyceraldehyde 3-phosphate = dihydroxyacetone phosphate. The protein operates within carbohydrate biosynthesis; gluconeogenesis. Its pathway is carbohydrate degradation; glycolysis; D-glyceraldehyde 3-phosphate from glycerone phosphate: step 1/1. Functionally, involved in the gluconeogenesis. Catalyzes stereospecifically the conversion of dihydroxyacetone phosphate (DHAP) to D-glyceraldehyde-3-phosphate (G3P). This chain is Triosephosphate isomerase, found in Ligilactobacillus salivarius (strain UCC118) (Lactobacillus salivarius).